The primary structure comprises 610 residues: Manganese lipoxygenase (610 aa).

Positions 1-16 are cleaved as a signal peptide; the sequence is MVALLIFLGIFTCVET. Residues 47–610 enclose the Lipoxygenase domain; the sequence is FTLPNEDDEI…PGVIPFYLSV (564 aa). N-linked (GlcNAc...) asparagine glycans are attached at residues Asn-157 and Asn-259. Mn(2+) is bound by residues His-290 and His-295. Asn-386 is a glycosylation site (N-linked (GlcNAc...) asparagine). Positions 475 and 479 each coordinate Mn(2+). A glycan (N-linked (GlcNAc...) asparagine) is linked at Asn-540. Val-610 lines the Mn(2+) pocket.

It belongs to the lipoxygenase family. Manganese lipoxygenase subfamily. The cofactor is Mn(2+). N- and O-glycosylated.

The protein resides in the secreted. The enzyme catalyses (9Z,12Z)-octadecadienoate + O2 = (11S)-hydroperoxy-(9Z,12Z)-octadecadienoate. It carries out the reaction (9Z,12Z)-octadecadienoate + O2 = (11R)-hydroperoxy-(9Z,12Z)-octadecadienoate. It catalyses the reaction (9Z,12Z)-octadecadienoate + O2 = (13S)-hydroperoxy-(9Z,11E)-octadecadienoate. The catalysed reaction is (9Z,12Z,15Z)-octadecatrienoate + O2 = (11S)-hydroperoxy-(9Z,12Z,15Z)-octadecatrienoate. In terms of biological role, lipoxygenase that metabolizes linoleic and alpha-linolenic acids to 9-, 11- and 13-hydroperoxy fatty acids. Oxidizes linoleic acid to mainly 11R-, 13S- and racemic 9-HPODE, and alpha-linolenic acid to 11-HPOTrE. The chain is Manganese lipoxygenase from Fusarium oxysporum (strain Fo5176) (Fusarium vascular wilt).